A 159-amino-acid chain; its full sequence is Cyclic pyranopterin monophosphate synthase (159 aa).

Residues 75-77 (LCH) and 113-114 (ME) each bind substrate. Residue D128 is part of the active site.

It belongs to the MoaC family. In terms of assembly, homohexamer; trimer of dimers.

The catalysed reaction is (8S)-3',8-cyclo-7,8-dihydroguanosine 5'-triphosphate = cyclic pyranopterin phosphate + diphosphate. It functions in the pathway cofactor biosynthesis; molybdopterin biosynthesis. Catalyzes the conversion of (8S)-3',8-cyclo-7,8-dihydroguanosine 5'-triphosphate to cyclic pyranopterin monophosphate (cPMP). This is Cyclic pyranopterin monophosphate synthase from Aliivibrio salmonicida (strain LFI1238) (Vibrio salmonicida (strain LFI1238)).